The chain runs to 156 residues: Cytochrome c-type biogenesis protein CcmE 1 (156 aa).

At 1–8 (MNATRRQR) the chain is on the cytoplasmic side. Residues 9–29 (LWWVICVLTAAALAVTLIVFA) form a helical; Signal-anchor for type II membrane protein membrane-spanning segment. At 30–156 (LQRNMSYLFT…ATATPLTAPR (127 aa)) the chain is on the periplasmic side. Positions 123 and 127 each coordinate heme. A disordered region spans residues 137–156 (AEGHAGKPIPATATPLTAPR). A compositionally biased stretch (low complexity) spans 146–156 (PATATPLTAPR).

The protein belongs to the CcmE/CycJ family.

The protein resides in the cell inner membrane. Functionally, heme chaperone required for the biogenesis of c-type cytochromes. Transiently binds heme delivered by CcmC and transfers the heme to apo-cytochromes in a process facilitated by CcmF and CcmH. The sequence is that of Cytochrome c-type biogenesis protein CcmE 1 from Xanthomonas euvesicatoria pv. vesicatoria (strain 85-10) (Xanthomonas campestris pv. vesicatoria).